The chain runs to 223 residues: Translation initiation factor 6 (223 aa).

This sequence belongs to the eIF-6 family.

Functionally, binds to the 50S ribosomal subunit and prevents its association with the 30S ribosomal subunit to form the 70S initiation complex. The polypeptide is Translation initiation factor 6 (Saccharolobus islandicus (strain M.16.27) (Sulfolobus islandicus)).